A 311-amino-acid polypeptide reads, in one-letter code: MALIIRSEIDKATQAITTALPWRDYYELTKPKVVMLMLLTSLIGMLLATPSPAPLWLLVLGNLGIGLCAGAAAAVNHLVDRHVDVKMARTFHRPVANGRITPTNALLFSALLGGVGLWILSSFINALTAWLTLASLLGYAVIYTLFLKRATPQNIVIGGLAGAAPPLLGWTAVTGELDGHGLLLVLIIFAWTPPHFWALALYRKKEYAKAGIPMLPVTHGDSYTRLHIVLYTVILIAVTLLPFATRMMGYCYLVGALVLGAGFLYRALKLLVSKDPKQGLETFKFSIIYLMALFVVMLVDHYLFPIPVYGV.

9 consecutive transmembrane segments (helical) span residues 33–53 (VVML…PSPA), 55–75 (LWLL…AAAV), 104–124 (NALL…SSFI), 127–147 (LTAW…TLFL), 155–175 (IVIG…AVTG), 181–201 (GLLL…ALAL), 228–248 (IVLY…TRMM), 252–272 (YLVG…KLLV), and 287–307 (IIYL…FPIP).

It belongs to the UbiA prenyltransferase family. Protoheme IX farnesyltransferase subfamily.

The protein localises to the cell inner membrane. It catalyses the reaction heme b + (2E,6E)-farnesyl diphosphate + H2O = Fe(II)-heme o + diphosphate. It participates in porphyrin-containing compound metabolism; heme O biosynthesis; heme O from protoheme: step 1/1. In terms of biological role, converts heme B (protoheme IX) to heme O by substitution of the vinyl group on carbon 2 of heme B porphyrin ring with a hydroxyethyl farnesyl side group. The chain is Protoheme IX farnesyltransferase from Teredinibacter turnerae (strain ATCC 39867 / T7901).